The sequence spans 335 residues: N-lysine methyltransferase KMT5A-A (335 aa).

Disordered stretches follow at residues 1-91 (MGRG…EVEK) and 133-183 (LPPE…EIES). The span at 67–91 (SVTHHESKCLGKPSTETRKKAEVEK) shows a compositional bias: basic and acidic residues. The span at 145–161 (VKNKPLRKKTQRQKSPN) shows a compositional bias: basic residues. The 122-residue stretch at 199-320 (EGIKMHMITG…VGEELLYDYG (122 aa)) folds into the SET domain. S-adenosyl-L-methionine-binding positions include 209-211 (KGR), Tyr-254, and 281-282 (NH).

It belongs to the class V-like SAM-binding methyltransferase superfamily. Histone-lysine methyltransferase family. PR/SET subfamily.

Its subcellular location is the nucleus. It is found in the chromosome. It catalyses the reaction L-lysyl(20)-[histone H4] + S-adenosyl-L-methionine = N(6)-methyl-L-lysyl(20)-[histone H4] + S-adenosyl-L-homocysteine + H(+). The catalysed reaction is L-lysyl-[protein] + S-adenosyl-L-methionine = N(6)-methyl-L-lysyl-[protein] + S-adenosyl-L-homocysteine + H(+). Protein-lysine N-methyltransferase that monomethylates both histones and non-histone proteins. Specifically monomethylates 'Lys-20' of histone H4 (H4K20me1). H4K20me1 is enriched during mitosis and represents a specific tag for epigenetic transcriptional repression. Mainly functions in euchromatin regions, thereby playing a central role in the silencing of euchromatic genes. Required for cell proliferation, probably by contributing to the maintenance of proper higher-order structure of DNA during mitosis. Involved in chromosome condensation and proper cytokinesis. The sequence is that of N-lysine methyltransferase KMT5A-A from Xenopus laevis (African clawed frog).